Here is a 232-residue protein sequence, read N- to C-terminus: Putative uridine kinase DAS2 (232 aa).

17-24 lines the ATP pocket; the sequence is GGHATGVG.

This sequence belongs to the uridine kinase family.

Its subcellular location is the cytoplasm. It localises to the nucleus. The enzyme catalyses uridine + ATP = UMP + ADP + H(+). It catalyses the reaction cytidine + ATP = CMP + ADP + H(+). It participates in pyrimidine metabolism; CTP biosynthesis via salvage pathway; CTP from cytidine: step 1/3. Its pathway is pyrimidine metabolism; UMP biosynthesis via salvage pathway; UMP from uridine: step 1/1. In terms of biological role, putative uridine kinase identified in a screen for mutants with increased levels of rDNA transcription. This is Putative uridine kinase DAS2 (DAS2) from Saccharomyces cerevisiae (strain ATCC 204508 / S288c) (Baker's yeast).